The primary structure comprises 838 residues: MNYDLFSAQKKVEYLDKLRIERALSGSSGEFQHVFQLLTLLLHINHPNLPGYVADAPVGIADFVISPYQKQYLLTTVPSLEANQSLLPSFSYRSTNAILGVYVMGSIASISQTPKSDLDTWVCHRDDLSTKEKEALQRKTHLLKNWAKQFNIEINFYLMDQKRFRCFRYAEPLTAENCGSAQYMLLLDEFYRSAIRLAGKPLLWLHLLIEQEENYESEVERLVRTQQICLDDWVDFGGLGQLSANEYFGASLWQLYKGIDAPYKSVIKILLLETYSSEYPNTYLIARQFKEELLTGKLNPSHHFDPYLAMLQRATRYLTKHNELKRLGFVRRSVYLKATEGMCWQDPNATNNWRLQHLQKLIQEWDWSDALIEELNQRANWKIKQVKKAHNSLIKFLMLSYRNLVAFARKHKVNSSIMPQDISVLTRKLYTAFEELPGKITLLNPQISLNLSEKNLLFFEVKGSKTFKDGWYVVNQTPSVAGFVQKRYTEYSESLNKLVAWAYFNRILTANTDLHIISPNVSLTTLRHFVTDLRLSFPVTVSSVTNEDLTHACEIRSLIVAVNLTVDPTKKITQVKSRIQASDLFSFGPKEESLVGSIDITYRNLWNEIRTLHFEGPNAILLALKVLSNKIHRGAPSPKLIQVFSYSHRYRRTLSNIVTALINRCISIQIGDALPPQNNLLRVAGKNWQFFFEERGISLQEIHSNEELEATGFDTALQTEVEEKESALPDTSRTYPPEIDHFASEGFLQFFFEDNSDGSFNVYILDEANRIEIYRNCDGQKEKKILEINHIYQSSGLDENNNPYKIVQRDFNYPQFYQLLLQENGVKIVPFHSRLAMS.

Residues 1–541 (MNYDLFSAQK…DLRLSFPVTV (541 aa)) form a catalytic region. The segment at 547–838 (EDLTHACEIR…VPFHSRLAMS (292 aa)) is regulatory.

This sequence belongs to the adenylyl cyclase class-1 family.

Its subcellular location is the cytoplasm. The catalysed reaction is ATP = 3',5'-cyclic AMP + diphosphate. The polypeptide is Adenylate cyclase (cya) (Pasteurella multocida (strain Pm70)).